Consider the following 192-residue polypeptide: Protein GrpE (192 aa).

Residues 1–34 (MSSKEQKTPNEQVSEEMENTAEQQVEATQETGEC) are disordered. Residues 20-31 (TAEQQVEATQET) are compositionally biased toward polar residues.

The protein belongs to the GrpE family. Homodimer.

It localises to the cytoplasm. Participates actively in the response to hyperosmotic and heat shock by preventing the aggregation of stress-denatured proteins, in association with DnaK and GrpE. It is the nucleotide exchange factor for DnaK and may function as a thermosensor. Unfolded proteins bind initially to DnaJ; upon interaction with the DnaJ-bound protein, DnaK hydrolyzes its bound ATP, resulting in the formation of a stable complex. GrpE releases ADP from DnaK; ATP binding to DnaK triggers the release of the substrate protein, thus completing the reaction cycle. Several rounds of ATP-dependent interactions between DnaJ, DnaK and GrpE are required for fully efficient folding. The polypeptide is Protein GrpE (Yersinia pseudotuberculosis serotype I (strain IP32953)).